A 464-amino-acid polypeptide reads, in one-letter code: Antithrombin-III (464 aa).

The N-terminal stretch at 1–32 (MYSNVIGTVTSGKRKVYLLSLLLIGFWDCVTC) is a signal peptide. Cystine bridges form between Cys-40/Cys-160 and Cys-53/Cys-127. The residue at position 63 (Thr-63) is a Phosphothreonine; by FAM20C. The residue at position 68 (Ser-68) is a Phosphoserine; by FAM20C. Residue Trp-81 coordinates heparin. N-linked (GlcNAc...) asparagine glycosylation is present at Asn-128. Arg-161 provides a ligand contact to heparin. N-linked (GlcNAc...) asparagine glycosylation is present at Asn-167. Arg-177 contacts heparin. Asn-187 carries N-linked (GlcNAc...) (complex) asparagine glycosylation. An N-linked (GlcNAc...) asparagine glycan is attached at Asn-224. Residues Cys-279 and Cys-462 are joined by a disulfide bond.

Belongs to the serpin family. In terms of assembly, forms protease inhibiting heterodimer with TMPRSS7. Phosphorylated by FAM20C in the extracellular medium. In terms of tissue distribution, found in plasma.

It is found in the secreted. Its subcellular location is the extracellular space. Functionally, most important serine protease inhibitor in plasma that regulates the blood coagulation cascade. AT-III inhibits thrombin, matriptase-3/TMPRSS7, as well as factors IXa, Xa and XIa. Its inhibitory activity is greatly enhanced in the presence of heparin. In Homo sapiens (Human), this protein is Antithrombin-III (SERPINC1).